Here is a 101-residue protein sequence, read N- to C-terminus: MQLTALLALATLAIAAPAEPSEVAPRNVLTGPCSSGVTNSNPQCCGAGILGILYFDCETPDEVSSPINPLKTICAAEGLQAKCCTLGIAGLGVLCTDALPE.

The N-terminal stretch at 1-15 (MQLTALLALATLAIA) is a signal peptide. 4 cysteine pairs are disulfide-bonded: cysteine 33/cysteine 83, cysteine 44/cysteine 74, cysteine 45/cysteine 57, and cysteine 84/cysteine 95.

This sequence belongs to the cerato-ulmin hydrophobin family. In terms of assembly, homodimer. Homodimers further self-assemble to form highly ordered films at water-air interfaces through intermolecular interactions.

The protein localises to the secreted. The protein resides in the cell wall. Its function is as follows. Aerial growth, conidiation, and dispersal of filamentous fungi in the environment rely upon a capability of their secreting small amphipathic proteins called hydrophobins (HPBs) with low sequence identity. Class I can self-assemble into an outermost layer of rodlet bundles on aerial cell surfaces, conferring cellular hydrophobicity that supports fungal growth, development and dispersal; whereas Class II form highly ordered films at water-air interfaces through intermolecular interactions but contribute nothing to the rodlet structure. This chain is Class II hydrophobin 5, found in Trichoderma asperellum (strain ATCC 204424 / CBS 433.97 / NBRC 101777).